A 196-amino-acid chain; its full sequence is Adenylate kinase (196 aa).

10 to 15 is a binding site for ATP; the sequence is GAGKGT. The tract at residues 30-59 is NMP; that stretch reads STGDMLRAAVSAGTEIGKRAKAVMDAGGLV. AMP-binding positions include T31, R36, 57 to 59, 85 to 88, and Q92; these read GLV and GYPR. Residues 126 to 142 are LID; sequence NRVAETIAAGGTVRSDD. R127 contributes to the ATP binding site. The AMP site is built by R139 and R150. An ATP-binding site is contributed by A178.

It belongs to the adenylate kinase family. In terms of assembly, monomer.

It is found in the cytoplasm. It catalyses the reaction AMP + ATP = 2 ADP. Its pathway is purine metabolism; AMP biosynthesis via salvage pathway; AMP from ADP: step 1/1. Functionally, catalyzes the reversible transfer of the terminal phosphate group between ATP and AMP. Plays an important role in cellular energy homeostasis and in adenine nucleotide metabolism. This Agrobacterium fabrum (strain C58 / ATCC 33970) (Agrobacterium tumefaciens (strain C58)) protein is Adenylate kinase.